We begin with the raw amino-acid sequence, 156 residues long: 6,7-dimethyl-8-ribityllumazine synthase (156 aa).

Residues Phe-23, Ala-57 to Glu-59, and Thr-81 to Ile-83 contribute to the 5-amino-6-(D-ribitylamino)uracil site. Ser-86–Thr-87 is a (2S)-2-hydroxy-3-oxobutyl phosphate binding site. The active-site Proton donor is His-89. Phe-114 contributes to the 5-amino-6-(D-ribitylamino)uracil binding site. Arg-128 serves as a coordination point for (2S)-2-hydroxy-3-oxobutyl phosphate.

This sequence belongs to the DMRL synthase family. As to quaternary structure, forms an icosahedral capsid composed of 60 subunits, arranged as a dodecamer of pentamers.

It catalyses the reaction (2S)-2-hydroxy-3-oxobutyl phosphate + 5-amino-6-(D-ribitylamino)uracil = 6,7-dimethyl-8-(1-D-ribityl)lumazine + phosphate + 2 H2O + H(+). It functions in the pathway cofactor biosynthesis; riboflavin biosynthesis; riboflavin from 2-hydroxy-3-oxobutyl phosphate and 5-amino-6-(D-ribitylamino)uracil: step 1/2. In terms of biological role, catalyzes the formation of 6,7-dimethyl-8-ribityllumazine by condensation of 5-amino-6-(D-ribitylamino)uracil with 3,4-dihydroxy-2-butanone 4-phosphate. This is the penultimate step in the biosynthesis of riboflavin. In Halalkalibacterium halodurans (strain ATCC BAA-125 / DSM 18197 / FERM 7344 / JCM 9153 / C-125) (Bacillus halodurans), this protein is 6,7-dimethyl-8-ribityllumazine synthase.